Here is a 488-residue protein sequence, read N- to C-terminus: 3-octaprenyl-4-hydroxybenzoate carboxy-lyase (488 aa).

Asn-172 provides a ligand contact to Mn(2+). Residues Ile-175–Arg-177, Arg-189–Leu-191, and Arg-194–Gly-195 each bind prenylated FMN. Glu-238 lines the Mn(2+) pocket. The active-site Proton donor is Asp-287.

It belongs to the UbiD family. As to quaternary structure, homohexamer. The cofactor is prenylated FMN. It depends on Mn(2+) as a cofactor.

It localises to the cell membrane. It carries out the reaction a 4-hydroxy-3-(all-trans-polyprenyl)benzoate + H(+) = a 2-(all-trans-polyprenyl)phenol + CO2. The protein operates within cofactor biosynthesis; ubiquinone biosynthesis. In terms of biological role, catalyzes the decarboxylation of 3-octaprenyl-4-hydroxy benzoate to 2-octaprenylphenol, an intermediate step in ubiquinone biosynthesis. This chain is 3-octaprenyl-4-hydroxybenzoate carboxy-lyase, found in Pseudomonas aeruginosa (strain LESB58).